The following is a 431-amino-acid chain: 23S rRNA (uracil(1939)-C(5))-methyltransferase RlmD (431 aa).

The region spanning 10–68 (RVTTRQIITVKVNDLDSFGQGVARHNGKALFIPGLLPEESAEVIITEDKKQFARARVSR) is the TRAM domain. [4Fe-4S] cluster contacts are provided by Cys-81, Cys-87, Cys-90, and Cys-161. S-adenosyl-L-methionine contacts are provided by Gln-264, Phe-293, Asn-298, Glu-314, Asn-341, and Asp-362. Cys-388 serves as the catalytic Nucleophile.

This sequence belongs to the class I-like SAM-binding methyltransferase superfamily. RNA M5U methyltransferase family. RlmD subfamily.

It catalyses the reaction uridine(1939) in 23S rRNA + S-adenosyl-L-methionine = 5-methyluridine(1939) in 23S rRNA + S-adenosyl-L-homocysteine + H(+). Its function is as follows. Catalyzes the formation of 5-methyl-uridine at position 1939 (m5U1939) in 23S rRNA. This chain is 23S rRNA (uracil(1939)-C(5))-methyltransferase RlmD, found in Salmonella typhimurium (strain LT2 / SGSC1412 / ATCC 700720).